A 154-amino-acid polypeptide reads, in one-letter code: Lipoprotein signal peptidase (154 aa).

Transmembrane regions (helical) follow at residues Leu57 to Tyr77 and Ile86 to Val103. Active-site residues include Asp110 and Asp129. A helical membrane pass occupies residues Val124–Val144.

The protein belongs to the peptidase A8 family.

The protein localises to the cell membrane. It carries out the reaction Release of signal peptides from bacterial membrane prolipoproteins. Hydrolyzes -Xaa-Yaa-Zaa-|-(S,diacylglyceryl)Cys-, in which Xaa is hydrophobic (preferably Leu), and Yaa (Ala or Ser) and Zaa (Gly or Ala) have small, neutral side chains.. Its pathway is protein modification; lipoprotein biosynthesis (signal peptide cleavage). Its function is as follows. This protein specifically catalyzes the removal of signal peptides from prolipoproteins. The chain is Lipoprotein signal peptidase from Clostridium acetobutylicum (strain ATCC 824 / DSM 792 / JCM 1419 / IAM 19013 / LMG 5710 / NBRC 13948 / NRRL B-527 / VKM B-1787 / 2291 / W).